A 223-amino-acid polypeptide reads, in one-letter code: Carnitine transport permease protein OpuCD (223 aa).

Residues 22 to 202 (FWRHFLMSAY…VMAILADVLL (181 aa)) form the ABC transmembrane type-1 domain. The next 5 membrane-spanning stretches (helical) occupy residues 27-47 (LMSA…GVYI), 63-83 (IIQT…MGLG), 87-107 (VVLS…YTGI), 148-168 (ALVI…GGLG), and 182-202 (AIIL…DVLL).

The protein belongs to the binding-protein-dependent transport system permease family. The complex is composed of two ATP-binding proteins (OpuCA), two transmembrane proteins (OpuCB and OpuCD) and a solute-binding protein (OpuCC).

The protein resides in the cell membrane. Part of the ABC transporter complex OpuCABCD involved in carnitine uptake. Probably responsible for the translocation of the substrate across the membrane. Involved, with BetL and GbuABC, in osmoprotection and cryoprotection of Listeria. Can also mediate weak glycine betaine transport. This is Carnitine transport permease protein OpuCD (opuCD) from Listeria monocytogenes serotype 1/2a (strain 10403S).